Reading from the N-terminus, the 365-residue chain is Flagellar P-ring protein (365 aa).

Positions 1–19 are cleaved as a signal peptide; sequence MIKFLSALILLLVITAAQA.

It belongs to the FlgI family. As to quaternary structure, the basal body constitutes a major portion of the flagellar organelle and consists of four rings (L,P,S, and M) mounted on a central rod.

The protein localises to the periplasm. The protein resides in the bacterial flagellum basal body. Assembles around the rod to form the L-ring and probably protects the motor/basal body from shearing forces during rotation. The sequence is that of Flagellar P-ring protein from Escherichia coli O81 (strain ED1a).